Here is a 326-residue protein sequence, read N- to C-terminus: MSRVEPIKKVSVVIPVYNEQESLPALLERTTAACKQLTQPYEIILVDDGSSDNSADMLTAAAEQPGSCVIAVLLNRNYGQHSAIMAGFNQVSGDLVITLDADLQNPPEEIPRLVKVAEEGYDVVGTVRANRQDSWFRKSASRIINMMIQRATGKSMGDYGCMLRAYRRHIIEAMLNCHERSTFIPILANTFARRTTEIEVLHAEREFGDSKYSLMKLINLMYDLITCLTTTPLRLLSVVGSVVALSGFLLAVLLIALRLIMGPEWSGGGVFTLFAVLFTFIGAQFVGMGLLGEYIGRIYTDVRARPRYFVQKVVGEQPNHNTQEEE.

2 helical membrane-spanning segments follow: residues 235 to 255 (LLSVVGSVVALSGFLLAVLLI) and 270 to 290 (VFTLFAVLFTFIGAQFVGMGL).

It belongs to the glycosyltransferase 2 family.

It localises to the cell inner membrane. It catalyses the reaction UDP-4-deoxy-4-formamido-beta-L-arabinose + di-trans,octa-cis-undecaprenyl phosphate = 4-deoxy-4-formamido-alpha-L-arabinopyranosyl di-trans,octa-cis-undecaprenyl phosphate + UDP. Its pathway is glycolipid biosynthesis; 4-amino-4-deoxy-alpha-L-arabinose undecaprenyl phosphate biosynthesis; 4-amino-4-deoxy-alpha-L-arabinose undecaprenyl phosphate from UDP-4-deoxy-4-formamido-beta-L-arabinose and undecaprenyl phosphate: step 1/2. The protein operates within bacterial outer membrane biogenesis; lipopolysaccharide biosynthesis. Functionally, catalyzes the transfer of 4-deoxy-4-formamido-L-arabinose from UDP to undecaprenyl phosphate. The modified arabinose is attached to lipid A and is required for resistance to polymyxin and cationic antimicrobial peptides. This Serratia proteamaculans (strain 568) protein is Undecaprenyl-phosphate 4-deoxy-4-formamido-L-arabinose transferase.